We begin with the raw amino-acid sequence, 191 residues long: Small ribosomal subunit protein uS11m (191 aa).

The interval 37–62 is disordered; sequence PRLEDSAARQNTEREAAPSRFSLYPP. Positions 38–53 are enriched in basic and acidic residues; that stretch reads RLEDSAARQNTEREAA.

It belongs to the universal ribosomal protein uS11 family. Component of the mitochondrial ribosome small subunit (28S) which comprises a 12S rRNA and about 30 distinct proteins.

Its subcellular location is the mitochondrion. In Mus musculus (Mouse), this protein is Small ribosomal subunit protein uS11m (Mrps11).